We begin with the raw amino-acid sequence, 146 residues long: 3-hydroxyacyl-[acyl-carrier-protein] dehydratase FabZ (146 aa).

H49 is a catalytic residue.

It belongs to the thioester dehydratase family. FabZ subfamily.

It is found in the cytoplasm. It catalyses the reaction a (3R)-hydroxyacyl-[ACP] = a (2E)-enoyl-[ACP] + H2O. In terms of biological role, involved in unsaturated fatty acids biosynthesis. Catalyzes the dehydration of short chain beta-hydroxyacyl-ACPs and long chain saturated and unsaturated beta-hydroxyacyl-ACPs. This Wolbachia sp. subsp. Brugia malayi (strain TRS) protein is 3-hydroxyacyl-[acyl-carrier-protein] dehydratase FabZ.